The sequence spans 292 residues: Bifunctional protein FolD (292 aa).

Residues G166–S168, S191, and I232 contribute to the NADP(+) site.

The protein belongs to the tetrahydrofolate dehydrogenase/cyclohydrolase family. As to quaternary structure, homodimer.

The catalysed reaction is (6R)-5,10-methylene-5,6,7,8-tetrahydrofolate + NADP(+) = (6R)-5,10-methenyltetrahydrofolate + NADPH. It carries out the reaction (6R)-5,10-methenyltetrahydrofolate + H2O = (6R)-10-formyltetrahydrofolate + H(+). It participates in one-carbon metabolism; tetrahydrofolate interconversion. Catalyzes the oxidation of 5,10-methylenetetrahydrofolate to 5,10-methenyltetrahydrofolate and then the hydrolysis of 5,10-methenyltetrahydrofolate to 10-formyltetrahydrofolate. This is Bifunctional protein FolD from Wolbachia pipientis wMel.